We begin with the raw amino-acid sequence, 491 residues long: MYRVRSMESTATSSPSSSLMVHPTNFRVIIVGGSIAGLTLAHCLSKIGVDYVILEKRQQIAPQEGASIGILPHGGRILDQLGLFNAIQRNVEPLTTAHISYPNGFTHTNQSPTLIHERFGLPLAFLERRKLLQILYWSLPDTSRVQVGKTVVSVDHIWGDSGMAVRTRDGSTFYGDIVVGADGVHSRVRHEMWRLAEIDLPGSITEREKDGMTVDYICVFGISASVPDLRPGEQVASLHDGRSFLVFPGKDGRVFWFLLKKLDRRYTYTSAPRLTPLDIDTIAGSFISDHIWNGVSFGSLWERREVTGVTNLEENVFSTWHSGRIVCIGDSMHKMAPNTGQGANCAIEDAAALANAIHGAIEHVDRPSMAEVQSFLRSFNESRLPRVREIYKSASVVVRLHARENLALRLVGRYYLPYSGDVPANTASKLIADGVQLSFLAPSLHSGPGWEKYSMKNGVAKSTVVWTSLGILGLVVFLFLLFRVRARFSSF.

FAD is bound by residues E55, G69, R128, D330, and A343. The N-linked (GlcNAc...) asparagine glycan is linked to N380. The helical transmembrane segment at 462–482 threads the bilayer; sequence STVVWTSLGILGLVVFLFLLF.

Belongs to the paxM FAD-dependent monooxygenase family. FAD is required as a cofactor.

It localises to the membrane. The protein operates within secondary metabolite biosynthesis; terpenoid biosynthesis. FAD-dependent monooxygenase; part of the cluster A that mediates the biosynthesis of chevalone E and its oxidized derivatives that possess a unique five-membered lactone ring and can synergistically enhance the cytotoxicity of doxorubicin (DOX) in breast cancer cells. Within the pathway, cle3 takes part to the biosynthesis of the molecular scaffold by catalyzing the formation of an (S)-epoxide ring at the terminal olefin of the geranylgeranyl group. The molecular scaffold is commonly biosynthesized by a series of enzymes including the non-reducing polyketide synthase (NR-PKS) cle1 that produces the alpha-pyrone triacetic acid lactone (TAL); The membrane-bound prenyltransferase cle5 that accepts TAL as its substrate to perform a C-3 geranylgeranylation reaction, in which the pathway-dedicated GGPS cle6 is required to provide GGPP, the other substrate of cle5; the FAD-dependent monooxygenase Cle3 that forms an (S)-epoxide ring at the terminal olefin of the geranylgeranyl group; and the terpene cyclase Cle7 that catalyzes the cyclization of the prenyl group that yields the pentacyclic pathway intermediate chevalone E. Chevalone E can derivatize into seven new oxidized analogs by the cytochrome P450 monooxygenases cle2 (acting at C-20) and cle4 (acting at C-11 and C-12). This chain is FAD-dependent monooxygenase cle3, found in Aspergillus versicolor.